The sequence spans 180 residues: Probable chorismate pyruvate-lyase (180 aa).

Substrate-binding residues include Arg-76, Leu-113, and Glu-171.

This sequence belongs to the UbiC family.

The protein localises to the cytoplasm. The enzyme catalyses chorismate = 4-hydroxybenzoate + pyruvate. It functions in the pathway cofactor biosynthesis; ubiquinone biosynthesis. Removes the pyruvyl group from chorismate, with concomitant aromatization of the ring, to provide 4-hydroxybenzoate (4HB) for the ubiquinone pathway. This Pseudoalteromonas translucida (strain TAC 125) protein is Probable chorismate pyruvate-lyase.